Reading from the N-terminus, the 930-residue chain is Translation initiation factor IF-2 (930 aa).

Disordered regions lie at residues 160–179 and 208–301; these read EPVE…FTDG and AKRA…AAAP. Positions 208-227 are enriched in basic and acidic residues; the sequence is AKRAAEEAKRTQPRAEKPAD. Composition is skewed to basic residues over residues 263 to 272 and 288 to 301; these read GHGHKKHHHG and KRGA…AAAP. Residues 431 to 600 form the tr-type G domain; it reads TRAPVVTVMG…SLQAEVLELT (170 aa). The segment at 440–447 is G1; it reads GHVDHGKT. 440 to 447 provides a ligand contact to GTP; it reads GHVDHGKT. The segment at 465–469 is G2; it reads GITQH. The interval 486 to 489 is G3; the sequence is DTPG. Residues 486-490 and 540-543 each bind GTP; these read DTPGH and NKCD. Positions 540-543 are G4; that stretch reads NKCD. The G5 stretch occupies residues 576–578; that stretch reads SAH.

The protein belongs to the TRAFAC class translation factor GTPase superfamily. Classic translation factor GTPase family. IF-2 subfamily.

It is found in the cytoplasm. Its function is as follows. One of the essential components for the initiation of protein synthesis. Protects formylmethionyl-tRNA from spontaneous hydrolysis and promotes its binding to the 30S ribosomal subunits. Also involved in the hydrolysis of GTP during the formation of the 70S ribosomal complex. The chain is Translation initiation factor IF-2 from Cellvibrio japonicus (strain Ueda107) (Pseudomonas fluorescens subsp. cellulosa).